The following is a 563-amino-acid chain: Beta-catenin-like protein 1 (563 aa).

Residue methionine 1 is modified to N-acetylmethionine. Residues 1–81 (MDVGELLSYQ…EEEEPLDESS (81 aa)) are disordered. Residues 16-33 (KRPRDDEEEELKTRRKQT) carry the Nuclear localization signal motif. Residues 34–45 (GPRERGRYREDE) show a composition bias toward basic and acidic residues. The span at 66–78 (DGEEEEEEEEPLD) shows a compositional bias: acidic residues. 2 HEAT repeats span residues 79–129 (ESSV…VVAT) and 134–176 (YHLL…TLHE). N6-acetyllysine is present on lysine 91. The Nuclear export signal (NES) motif lies at 130–140 (MPDLYHLLVEL). 5 ARM repeats span residues 178–228 (EEGA…MAEF), 229–273 (RPEM…LQDN), 274–323 (DENR…CLML), 325–363 (SNRE…AMIG), and 364–417 (PEGA…LLRN). Serine 389 carries the post-translational modification Phosphoserine. Positions 476 to 540 (DMEDEFYLRR…HIIKEYAENI (65 aa)) form a coiled coil. Serine 545 is subject to Phosphoserine.

In terms of assembly, component of the PRP19-CDC5L splicing complex composed of a core complex comprising a homotetramer of PRPF19, CDC5L, PLRG1 and BCAS2, and at least three less stably associated proteins CTNNBL1, CWC15 and HSPA8. Interacts directly with CWC15 and CDC5L in the complex. Interacts with AICDA; the interaction is important for the antibody diversification activity of AICDA. Interacts with PRPF31 (via its NLS). Interacts (via its N-terminal NLS) with KPNA1 and KPNA2.

Its subcellular location is the nucleus. In terms of biological role, component of the PRP19-CDC5L complex that forms an integral part of the spliceosome and is required for activating pre-mRNA splicing. Participates in AID/AICDA-mediated somatic hypermutation (SHM) and class-switch recombination (CSR), 2 processes resulting in the production of high-affinity, mutated isotype-switched antibodies. The sequence is that of Beta-catenin-like protein 1 (Ctnnbl1) from Rattus norvegicus (Rat).